The following is a 935-amino-acid chain: Transmembrane channel-like protein 1 (935 aa).

Disordered regions lie at residues 1–21 (MPRHKLIASESDVSIEVDEGK) and 37–204 (ERGK…LGSL). Composition is skewed to basic and acidic residues over residues 37–47 (ERGKIKQASRD), 54–79 (RNGETRRKASEKRTNEGESKKAEKKH), 109–136 (DKSSKEKKNMKNEKNKTLKLEEEKEKDV), 152–163 (NHEKTKQHLKEE), and 172–184 (PETTSESESKSES). Transmembrane regions (helical) follow at residues 303–340 (SSVASYFIFLRWMYGINMILFGLTFGLVMVPEALMGKP), 392–423 (RMPLSYFLVGVGTVAYSYMVVIRTMARNANEE), 480–510 (LTRFLRVLANFLVLCCLAGSGYLIYFVVRRS), 523–550 (WWERNEVNMVMSLLGMFCPMLFDVISTL), 555–589 (PRIALQWQLGRIFALFLGNLYTFIIALMDAIQLKR), 633–670 (WETMVGQEFVRLIISDTMTTYITLLIGDFMRAVLVRFL), 690–710 (VSGNVLGLIFNQGMIWMGAFY), 714–736 (LPALNLLRLHVSMYLQCWAVMCC), 751–774 (NFYMAMLLVILFLSTLPAIYTIVS), and 818–851 (LVLPFLLLLVLAIYYLQSTSKTYKRVNMELKKKL). Basic and acidic residues predominate over residues 874-886 (EQARKAGEQRRNS). Residues 874-935 (EQARKAGEQR…QQPQKNSKKR (62 aa)) are disordered. 2 stretches are compositionally biased toward polar residues: residues 899-919 (SHVSSSHTSRPPASRGHTSSG) and 926-935 (QQPQKNSKKR).

Belongs to the TMC family. As to quaternary structure, interacts specifically with isoform CD3 of PCDH15A (via cytoplasmic domain). In terms of tissue distribution, in adults, expression is restricted to the hair cells of inner ear and lateral line organ. Expressed at higher levels in the larval lateral-line neuromasts than in the larval inner ear. Expressed in the sensory hair cell patches of the ear at 4 days post fertilization (dpf).

The protein localises to the cell membrane. The catalysed reaction is Ca(2+)(in) = Ca(2+)(out). Functionally, pore-forming subunit of the mechanotransducer (MET) non-selective cation channel complex located at the tips of hair-cell stereocilia. Highly permeable to calcium and likely transports monovalent cations. The chain is Transmembrane channel-like protein 1 from Danio rerio (Zebrafish).